The chain runs to 349 residues: tRNA N6-adenosine threonylcarbamoyltransferase (349 aa).

His-118 and His-122 together coordinate Fe cation. Residues 141–145 (LVSGG), Asp-174, Gly-187, and Asn-280 contribute to the substrate site. A Fe cation-binding site is contributed by Asp-308.

Belongs to the KAE1 / TsaD family. Fe(2+) serves as cofactor.

It localises to the cytoplasm. The enzyme catalyses L-threonylcarbamoyladenylate + adenosine(37) in tRNA = N(6)-L-threonylcarbamoyladenosine(37) in tRNA + AMP + H(+). Its function is as follows. Required for the formation of a threonylcarbamoyl group on adenosine at position 37 (t(6)A37) in tRNAs that read codons beginning with adenine. Is involved in the transfer of the threonylcarbamoyl moiety of threonylcarbamoyl-AMP (TC-AMP) to the N6 group of A37, together with TsaE and TsaB. TsaD likely plays a direct catalytic role in this reaction. The sequence is that of tRNA N6-adenosine threonylcarbamoyltransferase from Acidovorax sp. (strain JS42).